Here is a 317-residue protein sequence, read N- to C-terminus: Melanocyte-stimulating hormone receptor (317 aa).

Residues 1–37 are Extracellular-facing; it reads MPMQGAQRRLLGSLNSIPTATPNLGLAANHTGAPCLE. Asparagine 29 carries N-linked (GlcNAc...) asparagine glycosylation. A helical membrane pass occupies residues 38 to 63; the sequence is VSIPDWLFLSLGLVSLVQNVLVVAAI. The Cytoplasmic segment spans residues 64 to 72; sequence AKNRNLHSP. Residues 73 to 93 traverse the membrane as a helical segment; the sequence is MYCFICCLALSDLLVSGSNML. The Extracellular segment spans residues 94–118; it reads ETAVILMLEAGALATRASVVQQLQN. Residues 119–140 traverse the membrane as a helical segment; it reads TIDVLTCSSMLCSLCFLGAIAL. The Cytoplasmic segment spans residues 141–163; it reads DRYVSIFYALRYHSIVTLPRARR. The chain crosses the membrane as a helical span at residues 164 to 183; that stretch reads AIAATWVASVLSSTLFIAYC. The Extracellular segment spans residues 184–191; that stretch reads DHAAVLLC. The helical transmembrane segment at 192–211 threads the bilayer; the sequence is LVVFFLAMLVLMAVLYVHML. Residues 212 to 240 lie on the Cytoplasmic side of the membrane; it reads ARACQHAQGITRLHKRQLPAHQGFGLRGA. The chain crosses the membrane as a helical span at residues 241-266; sequence ATLTILLGIFFLCWGPFFLHLMLVVL. Residues 267 to 279 are Extracellular-facing; it reads CPQHLTCSCIFKN. The helical transmembrane segment at 280–300 threads the bilayer; it reads FKVFLTLIICNTIIDPLIYAF. Residues 301–317 are Cytoplasmic-facing; the sequence is RSQELCRTLKEVLLCSW. Cysteine 315 carries the S-palmitoyl cysteine lipid modification.

The protein belongs to the G-protein coupled receptor 1 family. In terms of assembly, interacts with MGRN1, but does not undergo MGRN1-mediated ubiquitination; this interaction competes with GNAS-binding and thus inhibits agonist-induced cAMP production. Interacts with OPN3; the interaction results in a decrease in MC1R-mediated cAMP signaling and ultimately a decrease in melanin production in melanocytes.

It localises to the cell membrane. Functionally, receptor for MSH (alpha, beta and gamma) and ACTH. The activity of this receptor is mediated by G proteins which activate adenylate cyclase. Mediates melanogenesis, the production of eumelanin (black/brown) and phaeomelanin (red/yellow), via regulation of cAMP signaling in melanocytes. The sequence is that of Melanocyte-stimulating hormone receptor (MC1R) from Alouatta seniculus (Red howler monkey).